The following is an 89-amino-acid chain: Small ribosomal subunit protein uS15 (89 aa).

This sequence belongs to the universal ribosomal protein uS15 family. In terms of assembly, part of the 30S ribosomal subunit. Forms a bridge to the 50S subunit in the 70S ribosome, contacting the 23S rRNA.

One of the primary rRNA binding proteins, it binds directly to 16S rRNA where it helps nucleate assembly of the platform of the 30S subunit by binding and bridging several RNA helices of the 16S rRNA. Functionally, forms an intersubunit bridge (bridge B4) with the 23S rRNA of the 50S subunit in the ribosome. The protein is Small ribosomal subunit protein uS15 of Cupriavidus pinatubonensis (strain JMP 134 / LMG 1197) (Cupriavidus necator (strain JMP 134)).